The primary structure comprises 507 residues: Xylose import ATP-binding protein XylG (507 aa).

ABC transporter domains follow at residues 5–242 (LKMT…VGRE) and 259–504 (LEVK…LSEK). 37 to 44 (GENGSGKS) lines the ATP pocket.

It belongs to the ABC transporter superfamily. Xylose importer (TC 3.A.1.2.4) family. As to quaternary structure, the complex is composed of two ATP-binding proteins (XylG), two transmembrane proteins (XylH) and a solute-binding protein (XylF).

Its subcellular location is the cell inner membrane. It catalyses the reaction D-xylose(out) + ATP + H2O = D-xylose(in) + ADP + phosphate + H(+). Its function is as follows. Part of the ABC transporter complex XylFGH involved in xylose import. Responsible for energy coupling to the transport system. This chain is Xylose import ATP-binding protein XylG, found in Photobacterium profundum (strain SS9).